We begin with the raw amino-acid sequence, 102 residues long: MVAVHKVRYNVIMILGPEQTPNEKTTLDNCGLARRNLVLLKAVHTNCDSWNMNRYPLTLLKMANMAISWNTALKKKVNNVAWLLLKCNAPMELWYTCLSKNL.

This is an uncharacterized protein from Saccharomyces cerevisiae (strain ATCC 204508 / S288c) (Baker's yeast).